A 377-amino-acid polypeptide reads, in one-letter code: Chaperone protein DnaJ (377 aa).

Residues 8 to 73 (CYYETLEVER…DKRAAYDRFG (66 aa)) enclose the J domain. Residues 135 to 213 (GKTAQIEIPV…CSGQGRVTRE (79 aa)) form a CR-type zinc finger. Residues C148, C151, C165, C168, C187, C190, C201, and C204 each contribute to the Zn(2+) site. CXXCXGXG motif repeat units follow at residues 148–155 (CEACSGIG), 165–172 (CSTCGGAG), 187–194 (CPGCQGRG), and 201–208 (CPSCSGQG).

This sequence belongs to the DnaJ family. In terms of assembly, homodimer. Zn(2+) is required as a cofactor.

It is found in the cytoplasm. Functionally, participates actively in the response to hyperosmotic and heat shock by preventing the aggregation of stress-denatured proteins and by disaggregating proteins, also in an autonomous, DnaK-independent fashion. Unfolded proteins bind initially to DnaJ; upon interaction with the DnaJ-bound protein, DnaK hydrolyzes its bound ATP, resulting in the formation of a stable complex. GrpE releases ADP from DnaK; ATP binding to DnaK triggers the release of the substrate protein, thus completing the reaction cycle. Several rounds of ATP-dependent interactions between DnaJ, DnaK and GrpE are required for fully efficient folding. Also involved, together with DnaK and GrpE, in the DNA replication of plasmids through activation of initiation proteins. This is Chaperone protein DnaJ from Bradyrhizobium diazoefficiens (strain JCM 10833 / BCRC 13528 / IAM 13628 / NBRC 14792 / USDA 110).